The sequence spans 477 residues: Glycogen synthase (477 aa).

Residue K15 participates in ADP-alpha-D-glucose binding.

Belongs to the glycosyltransferase 1 family. Bacterial/plant glycogen synthase subfamily.

The enzyme catalyses [(1-&gt;4)-alpha-D-glucosyl](n) + ADP-alpha-D-glucose = [(1-&gt;4)-alpha-D-glucosyl](n+1) + ADP + H(+). The protein operates within glycan biosynthesis; glycogen biosynthesis. Functionally, synthesizes alpha-1,4-glucan chains using ADP-glucose. The sequence is that of Glycogen synthase from Salmonella choleraesuis (strain SC-B67).